The primary structure comprises 219 residues: MSGSSGPLSWPGPRPCALLFLLLLGPSSVLAISFHLPVNSRKCLREEIHKDLLVTGAYEITDQSGGAGGLRTHLKITDSAGHILYAKEDATKGKFAFTTEDYDMFEVCFESKGTGRIPDQLVILDMKHGVEAKNYEEIAKVEKLKPLEVELRRLEDLSESIVNDFAYMKKREEEMRDTNESTNTRVLYFSIFSMLCLIGLATWQVFYLRRFFKAKKLIE.

Positions 1 to 31 are cleaved as a signal peptide; sequence MSGSSGPLSWPGPRPCALLFLLLLGPSSVLA. The tract at residues 1 to 142 is required for interaction with STX17; the sequence is MSGSSGPLSW…KNYEEIAKVE (142 aa). The Lumenal segment spans residues 32-185; that stretch reads ISFHLPVNSR…RDTNESTNTR (154 aa). The GOLD domain occupies 41-193; sequence RKCLREEIHK…TRVLYFSIFS (153 aa). Residues 147-178 form a required for TMED10 and TMED2 cis-Golgi network localization region; that stretch reads LEVELRRLEDLSESIVNDFAYMKKREEEMRDT. Dimethylated arginine occurs at positions 171 and 176. A glycan (N-linked (GlcNAc...) asparagine) is linked at asparagine 179. A helical transmembrane segment spans residues 186–206; sequence VLYFSIFSMLCLIGLATWQVF. The interval 204 to 219 is interaction with COPG1; it reads QVFYLRRFFKAKKLIE. At 207–219 the chain is on the cytoplasmic side; sequence YLRRFFKAKKLIE. An interaction with ARF1 and IL1B region spans residues 207-219; sequence YLRRFFKAKKLIE. Positions 211-212 match the COPII vesicle coat-binding motif; it reads FF. Positions 211–219 match the COPI vesicle coat-binding motif; sequence FFKAKKLIE.

This sequence belongs to the EMP24/GP25L family. As to quaternary structure, predominantly dimeric and to a lesser extent monomeric in the ER. Monomer and dimer in ERGIC and cis-Golgi network. Forms homooligomer (via GOLD domain); the assembly is promoted by direct binding with leaderless cargos and may form a protein channel that facilitates cargo entry into the ERGIC. Forms heterooligomeric complexes with other members of the p24 family such as TMED2, TMED7 and TMED9. Interacts (via GOLD domain) with TMED2 (via GOLD domain); the complex is required for export of TMED10 from the ER to the cis-Golgi network; the complex is proposed to be involved in cis-Golgi network dynamics and / or biogenesis. Associates with the COPI vesicle coat subunits (coatomer). Tetramerization of the cytoplasmic domain at the Golgi membrane in vitro; the complex is proposed to interact with COPI coatomer and induce budding of the vesicles. Interacts with COPG1; the interaction involves TMED10 homodimer. Interacts with ARF1 (GDP-bound); the interaction probably involves a TMED10 oligomer. Interacts with SEC23A, SEC24B, SEC24C and SEC24D components of the coat protein complex II/COPII, indicative of an association of TMED10 with the COPII vesicle coat. Interacts with CD59. Interacts with MPPE1/PGAP5; the complex might recruit and sort GPI-anchored proteins to the ER-exit site, or the interaction might lead to recycling of PGAP5 between the ER and the Golgi. Interacts with F2LR1/PAR2. Interacts with KDELR2/ERD2; the interaction is disrupted by KDELR2 ligand. Found in a complex composed at least of SURF4, TMED2 and TMED10. Associates with the presenilin-dependent gamma-secretase complex. Interacts with STX17; the interaction is direct. Interacts with IL-1; the interaction is direct. Interacts with RAB21 (active GTP-bound form); the interaction is indirect and regulates TMED10 abundance and localization at the Golgi.

Its subcellular location is the endoplasmic reticulum membrane. The protein resides in the endoplasmic reticulum-Golgi intermediate compartment membrane. It is found in the golgi apparatus membrane. The protein localises to the golgi apparatus. It localises to the cis-Golgi network membrane. Its subcellular location is the trans-Golgi network membrane. The protein resides in the cytoplasmic vesicle. It is found in the secretory vesicle membrane. The protein localises to the cell membrane. It localises to the melanosome. Cargo receptor involved in protein vesicular trafficking and quality control in the endoplasmic reticulum (ER) and Golgi. The p24 protein family is a group of transmembrane proteins that bind coat protein complex I/COPI and coat protein complex II/COPII involved in vesicular trafficking between the membranes. Acts at the lumenal side for incorporation of secretory cargo molecules into transport vesicles and involved in vesicle coat formation at the cytoplasmic side. Mainly functions in the early secretory pathway and cycles between the ER, ER-Golgi intermediate compartment (ERGIC) and Golgi, mediating cargo transport through COPI and COPII-coated vesicles. In COPII vesicle-mediated anterograde transport, involved in the transport of GPI-anchored proteins by acting together with TMED2 as their cargo receptor; the function specifically implies SEC24C and SEC24D of the COPII vesicle coat and lipid raft-like microdomains of the ER. Recognizes GPI anchors structural remodeled in the ER by the GPI inositol-deacylase/PGAP1 and the metallophosphoesterase MPPE1/PGAP5. In COPI vesicle-mediated retrograde transport, involved in the biogenesis of COPI vesicles and vesicle coat recruitment. Involved in trafficking of amyloid beta A4 protein and soluble APP-beta release (independent from the modulation of gamma-secretase activity). Involved in the KDELR2-mediated retrograde transport of the toxin A subunit (CTX-A-K63)together with COPI and the COOH terminus of KDELR2. On Golgi membranes, acts as a primary receptor for ARF1-GDP, a GTP-binding protein involved in COPI-vesicle formation. Increases coatomer-dependent GTPase-activating activity of ARFGAP2 which mediates the hydrolysis of ARF1-bound GTP and therefore modulates protein trafficking from the Golgi apparatus. Involved in the exocytic trafficking of G protein-coupled receptors F2LR1/PAR2 (trypsin and tryspin-like enzyme receptor), OPRM1 (opioid receptor) and P2RY4 (UTD and UDP receptor) from the Golgi to the plasma membrane, thus contributing to receptor resensitization. In addition to its cargo receptor activity, may also act as a protein channel after oligomerization, facilitating the post-translational entry of leaderless cytoplasmic cargo into the ERGIC. Involved in the translocation into ERGIC, the vesicle entry and the secretion of leaderless cargos (lacking the secretion signal sequence), including the mature form of interleukin 1/IL-1 family members, the alpha-crystallin B chain HSPB5, the carbohydrate-binding proteins galectin-1/LGALS1 and galectin-3/LGALS3, the microtubule-associated protein Tau/MAPT, and the annexin A1/ANXA1; the translocation process is dependent on cargo protein unfolding and enhanced by chaperones HSP90AB1 and HSP90B1/GRP9. Could also associates with the presenilin-dependent gamma-secretase complex in order to regulate gamma-cleavages of the amyloid beta A4 protein to yield amyloid-beta 40/Abeta40. The protein is Transmembrane emp24 domain-containing protein 10 (TMED10) of Mesocricetus auratus (Golden hamster).